The sequence spans 245 residues: Probable phosphatase CKO_02035 (245 aa).

The Zn(2+) site is built by H7, H9, H15, H40, E73, H101, H131, D192, and H194.

Belongs to the PHP family. Homotrimer. Zn(2+) is required as a cofactor.

This chain is Probable phosphatase CKO_02035, found in Citrobacter koseri (strain ATCC BAA-895 / CDC 4225-83 / SGSC4696).